Here is a 266-residue protein sequence, read N- to C-terminus: Amylovoran biosynthesis glycosyltransferase AmsE (266 aa).

Belongs to the glycosyltransferase 2 family.

It functions in the pathway glycan metabolism; exopolysaccharide biosynthesis. In terms of biological role, involved in the biosynthesis of amylovoran which functions as a virulence factor. The sequence is that of Amylovoran biosynthesis glycosyltransferase AmsE (amsE) from Erwinia amylovora (Fire blight bacteria).